A 629-amino-acid polypeptide reads, in one-letter code: Polyadenylate-binding protein, cytoplasmic and nuclear (629 aa).

The segment covering 1 to 11 (MSAAETNQLQE) has biased composition (polar residues). The interval 1–48 (MSAAETNQLQESMEKLNIGSTTEEQSAAAATTTADQSAEEQGESSGVA) is disordered. Positions 20–36 (STTEEQSAAAATTTADQ) are enriched in low complexity. 4 consecutive RRM domains span residues 52-130 (ASLY…WSQR), 140-217 (GNIF…KHIS), 233-310 (TNIY…RAQK), and 336-413 (VNLF…LAQR). The disordered stretch occupies residues 503-534 (PPQFQQDFNGQNMRPQQQQQQQPRGGYYPNRN). A compositionally biased stretch (polar residues) spans 505–517 (QFQQDFNGQNMRP). One can recognise a PABC domain in the interval 537 to 618 (SKRDLAAIIS…ALTAFEEYKK (82 aa)).

Belongs to the polyadenylate-binding protein type-1 family.

The protein localises to the cytoplasm. The protein resides in the nucleus. Binds the poly(A) tail of mRNA. Appears to be an important mediator of the multiple roles of the poly(A) tail in mRNA biogenesis, stability and translation. In the nucleus, involved in both mRNA cleavage and polyadenylation. Is also required for efficient mRNA export to the cytoplasm. Acts in concert with a poly(A)-specific nuclease (PAN) to affect poly(A) tail shortening, which may occur concomitantly with either nucleocytoplasmic mRNA transport or translational initiation. In the cytoplasm, stimulates translation initiation and regulates mRNA decay through translation termination-coupled poly(A) shortening, probably mediated by PAN. The sequence is that of Polyadenylate-binding protein, cytoplasmic and nuclear (PAB1) from Candida albicans (strain SC5314 / ATCC MYA-2876) (Yeast).